We begin with the raw amino-acid sequence, 533 residues long: Dipeptidase (533 aa).

Residue Cys-3 is part of the active site.

The protein belongs to the peptidase C69 family.

It catalyses the reaction an L-aminoacyl-L-amino acid + H2O = 2 an L-alpha-amino acid. Its function is as follows. Hydrolyzes a wide range of dipeptides. Highest activity against Ala-Gln. This is Dipeptidase from Bifidobacterium longum (strain NCC 2705).